A 472-amino-acid polypeptide reads, in one-letter code: Kynureninase 1 (472 aa).

Pyridoxal 5'-phosphate-binding positions include Leu-146, Thr-147, 174 to 177 (FPSD), Ser-231, Asp-260, His-263, and Tyr-285. Lys-286 carries the post-translational modification N6-(pyridoxal phosphate)lysine. Pyridoxal 5'-phosphate is bound by residues Trp-326 and Asn-354.

Belongs to the kynureninase family. Homodimer. Requires pyridoxal 5'-phosphate as cofactor.

It localises to the cytoplasm. The enzyme catalyses L-kynurenine + H2O = anthranilate + L-alanine + H(+). It catalyses the reaction 3-hydroxy-L-kynurenine + H2O = 3-hydroxyanthranilate + L-alanine + H(+). Its pathway is amino-acid degradation; L-kynurenine degradation; L-alanine and anthranilate from L-kynurenine: step 1/1. It functions in the pathway cofactor biosynthesis; NAD(+) biosynthesis; quinolinate from L-kynurenine: step 2/3. Functionally, catalyzes the cleavage of L-kynurenine (L-Kyn) and L-3-hydroxykynurenine (L-3OHKyn) into anthranilic acid (AA) and 3-hydroxyanthranilic acid (3-OHAA), respectively. In Aspergillus niger (strain ATCC MYA-4892 / CBS 513.88 / FGSC A1513), this protein is Kynureninase 1 (bna5-1).